A 1107-amino-acid chain; its full sequence is Ubiquitin-associated protein 2-like (1107 aa).

Met1 carries the N-acetylmethionine modification. Residues Met1–Ala33 form a disordered region. In terms of domain architecture, UBA spans Asp49 to Gly89. Residues Asp92–Glu229 form a disordered region. A compositionally biased stretch (basic and acidic residues) spans Glu118–Arg132. The segment covering Arg133–Ser145 has biased composition (basic residues). Asymmetric dimethylarginine occurs at positions 187 and 190. Residues Asn213–Gly226 are compositionally biased toward low complexity. Phosphoserine occurs at positions 376, 380, and 436. Position 445 is a phosphothreonine (Thr445). Disordered regions lie at residues Ala461 to Ser513, Ser550 to Leu676, and Ala689 to Gly814. 5 positions are modified to phosphoserine: Ser474, Ser487, Ser490, Ser491, and Ser497. 2 stretches are compositionally biased toward low complexity: residues Gln494 to Leu505 and Ser554 to Ser589. Over residues Gly590–Glu656 the composition is skewed to polar residues. Phosphoserine is present on residues Ser624, Ser625, Ser628, and Ser629. Low complexity predominate over residues Ser665 to Ser675. The span at Ala689 to His713 shows a compositional bias: polar residues. Over residues Ser714–Ser804 the composition is skewed to low complexity. 2 positions are modified to phosphoserine: Ser872 and Ser879. Disordered regions lie at residues Phe885–Ala921 and Gln1060–Asn1107. Composition is skewed to low complexity over residues Pro893–Thr916 and Gln1073–Ser1087. The segment covering Ile1088 to Asn1107 has biased composition (polar residues).

As to quaternary structure, interacts with BMI1. Part of a complex consisting of UBAP2L, BMI1 and RNF2. Interacts with G3BP1 (via NTF2 domain); promoting stress granule formation.

The protein resides in the nucleus. It is found in the chromosome. It localises to the cytoplasm. The protein localises to the stress granule. Recruits the ubiquitination machinery to RNA polymerase II for polyubiquitination, removal and degradation, when the transcription-coupled nucleotide excision repair (TC-NER) machinery fails to resolve DNA damage. Plays an important role in the activity of long-term repopulating hematopoietic stem cells (LT-HSCs). Is a regulator of stress granule assembly, required for their efficient formation. Required for proper brain development and neocortex lamination. In Mus musculus (Mouse), this protein is Ubiquitin-associated protein 2-like.